We begin with the raw amino-acid sequence, 188 residues long: Large ribosomal subunit protein uL5 (188 aa).

It belongs to the universal ribosomal protein uL5 family. In terms of assembly, part of the 50S ribosomal subunit; part of the 5S rRNA/L5/L18/L25 subcomplex. Contacts the 5S rRNA and the P site tRNA. Forms a bridge to the 30S subunit in the 70S ribosome.

Functionally, this is one of the proteins that bind and probably mediate the attachment of the 5S RNA into the large ribosomal subunit, where it forms part of the central protuberance. In the 70S ribosome it contacts protein S13 of the 30S subunit (bridge B1b), connecting the 2 subunits; this bridge is implicated in subunit movement. Contacts the P site tRNA; the 5S rRNA and some of its associated proteins might help stabilize positioning of ribosome-bound tRNAs. This Aquifex pyrophilus protein is Large ribosomal subunit protein uL5.